The chain runs to 647 residues: MSFVAPDDRAYYNYSRAPGSAHGVGHESTSPDQRLPSSHSYNKSASAPNESPNQVYHPEMAGPPGSSHSYPPQPMTPLTGSTAYPPQHPPSGSYYLPTQQQQQQQSEQHIPSPPSSSNRPPSATGYTPDGQPIIPVGVSGGKMFRCRGYGDCDKVFTRSEHLARHVRKHTGERPFPCHCGKAFSRLDNLRQHAATVHAEQAQLNETMLASLAPIHAALSQRASREQRRRGEVVEVPKGAVERRRETRKAQAAAAQAAAANGHSQQNSPYAQYHESQWNAPPHPRPRTNGGYDYPYVPEHSLNDDAGPSRRPSSSAGYGYQQGYYDSARPPTAPGTGSSGESMSGLPYPYRPMSASGRELPVPAHYSESEPPATAHGPPPQSPMYGNVPPAQQQPPNWSSPPPGHGAYPPHDAAAYPPPPEGYYHPAHAAHGSYPPREDVYEYHPPGWQGQYPPAATNGGPYAQGYGTGAPPTAPPPHESPFQYNVANPGAEGYPYQNYDSRKRRAEDDFGKDDRKHPRPSSPSNSQVPDSSTAAHANGAHDAPHPHPHPGAAPGNGAMDPPRPHDPNWLPATSERRGSLAISALLGSPPKTMRSRPSTADGGAAGAHGYESYHYDPHGQVSDDQQTGVDKEREKKEEVKQQDDKKTQ.

Over residues 1 to 10 (MSFVAPDDRA) the composition is skewed to basic and acidic residues. The interval 1-132 (MSFVAPDDRA…ATGYTPDGQP (132 aa)) is disordered. Polar residues-rich tracts occupy residues 27 to 54 (ESTSPDQRLPSSHSYNKSASAPNESPNQ) and 66 to 84 (SSHSYPPQPMTPLTGSTAY). The span at 97–122 (PTQQQQQQQSEQHIPSPPSSSNRPPS) shows a compositional bias: low complexity. C2H2-type zinc fingers lie at residues 144 to 169 (FRCRGYGDCDKVFTRSEHLARHVRKH) and 175 to 197 (FPCHCGKAFSRLDNLRQHAATVH). Residues 220 to 647 (QRASREQRRR…VKQQDDKKTQ (428 aa)) are disordered. Residues 222 to 248 (ASREQRRRGEVVEVPKGAVERRRETRK) show a composition bias toward basic and acidic residues. Residues 249-259 (AQAAAAQAAAA) are compositionally biased toward low complexity. Polar residues predominate over residues 261–278 (GHSQQNSPYAQYHESQWN). 3 stretches are compositionally biased toward low complexity: residues 312–327 (SSSAGYGYQQGYYDSA), 404–414 (HGAYPPHDAAA), and 421–434 (GYYHPAHAAHGSYP). Basic and acidic residues predominate over residues 504-515 (RAEDDFGKDDRK). Residues 521-540 (SPSNSQVPDSSTAAHANGAH) show a composition bias toward low complexity. Positions 628 to 647 (VDKEREKKEEVKQQDDKKTQ) are enriched in basic and acidic residues.

The protein localises to the nucleus. Its subcellular location is the cytoplasm. In terms of biological role, transcription factor that promotes pheromone gene expression, which results in a subsequent increase in cell fusion. Also promotes production of melanin and capsule and thereby is required for full virulence. The protein is C2H2 finger domain transcription factor USV101 of Cryptococcus neoformans var. grubii serotype A (strain H99 / ATCC 208821 / CBS 10515 / FGSC 9487) (Filobasidiella neoformans var. grubii).